The chain runs to 459 residues: Ribulose bisphosphate carboxylase (459 aa).

Asparagine 111 lines the substrate pocket. Lysine 166 serves as the catalytic Proton acceptor. Residue lysine 168 coordinates substrate. Residues lysine 191, aspartate 193, and glutamate 194 each contribute to the Mg(2+) site. Lysine 191 is modified (N6-carboxylysine). Histidine 287 serves as the catalytic Proton acceptor. Residues arginine 288, histidine 321, and serine 368 each contribute to the substrate site.

Belongs to the RuBisCO large chain family. Type II subfamily. In terms of assembly, homodimer. Mg(2+) is required as a cofactor.

The catalysed reaction is 2 (2R)-3-phosphoglycerate + 2 H(+) = D-ribulose 1,5-bisphosphate + CO2 + H2O. The enzyme catalyses D-ribulose 1,5-bisphosphate + O2 = 2-phosphoglycolate + (2R)-3-phosphoglycerate + 2 H(+). RuBisCO catalyzes two reactions: the carboxylation of D-ribulose 1,5-bisphosphate, the primary event in carbon dioxide fixation, as well as the oxidative fragmentation of the pentose substrate. Both reactions occur simultaneously and in competition at the same active site. The protein is Ribulose bisphosphate carboxylase of Polaromonas naphthalenivorans (strain CJ2).